Consider the following 280-residue polypeptide: Dehydrogenase/reductase SDR family member 2, mitochondrial (280 aa).

The N-terminal 23 residues, 1–23 (MLSAVARGYQGWFHPCARLSVRM), are a transit peptide targeting the mitochondrion. NAD(+)-binding residues include S46 and I48. K96 carries the post-translational modification N6-acetyllysine; alternate. Residue K96 is modified to N6-succinyllysine; alternate. S172 contacts substrate. Residues Y185 and K189 each contribute to the NAD(+) site. The active-site Proton acceptor is Y185. An N6-acetyllysine; alternate modification is found at K219. K219 bears the N6-succinyllysine; alternate mark. An NAD(+)-binding site is contributed by T220. S223 is modified (phosphoserine). Residue K237 is modified to N6-succinyllysine.

The protein belongs to the short-chain dehydrogenases/reductases (SDR) family. Directly interacts with MDM2; this interaction occurs in the nucleus and does not target DHRS2 to degradation. Widely expressed, with highest levels in liver and kidney, followed by heart, spleen, skeletal muscle and placenta. In hemopoietic cells, expressed in dendritic cells, but not in monocytes, macrophages, granulocytes, nor in B and T lymphocytes.

It is found in the mitochondrion matrix. It localises to the nucleus. Its function is as follows. NADPH-dependent oxidoreductase which catalyzes the reduction of dicarbonyl compounds. Displays reductase activity in vitro with 3,4-hexanedione, 2,3-heptanedione and 1-phenyl-1,2-propanedione as substrates. May function as a dicarbonyl reductase in the enzymatic inactivation of reactive carbonyls involved in covalent modification of cellular components. Also displays a minor hydroxysteroid dehydrogenase activity toward bile acids such as ursodeoxycholic acid (UDCA) and isoursodeoxycholic acid (isoUDCA), which makes it unlikely to control hormone levels. Doesn't show any activity in vitro with retinoids and sugars as substrates. Attenuates MDM2-mediated p53/TP53 degradation, leading to p53/TP53 stabilization and increased transcription activity, resulting in the accumulation of MDM2 and CDKN1A/p21. Reduces proliferation, migration and invasion of cancer cells and well as the production of ROS in cancer. The sequence is that of Dehydrogenase/reductase SDR family member 2, mitochondrial from Homo sapiens (Human).